Here is a 136-residue protein sequence, read N- to C-terminus: Large ribosomal subunit protein uL16 (136 aa).

The protein belongs to the universal ribosomal protein uL16 family. In terms of assembly, part of the 50S ribosomal subunit.

Functionally, binds 23S rRNA and is also seen to make contacts with the A and possibly P site tRNAs. The chain is Large ribosomal subunit protein uL16 from Alteromonas mediterranea (strain DSM 17117 / CIP 110805 / LMG 28347 / Deep ecotype).